The primary structure comprises 600 residues: Sodium- and chloride-dependent betaine transporter (600 aa).

The interval 1–31 (MGTSEHVPLPTDEAKAKELEQSQHSEEPDRG) is disordered. Residues 1-38 (MGTSEHVPLPTDEAKAKELEQSQHSEEPDRGQWTGKFD) lie on the Cytoplasmic side of the membrane. The segment covering 12–30 (DEAKAKELEQSQHSEEPDR) has biased composition (basic and acidic residues). 3 consecutive transmembrane segments (helical) span residues 39-59 (FLMS…FPYL), 68-88 (FLVV…LMEV), and 116-136 (VVIA…AMFY). The Extracellular portion of the chain corresponds to 137 to 207 (MISSIAWVFP…DTGDISEFGG (71 aa)). The N-linked (GlcNAc...) asparagine glycan is linked to Asn165. The next 2 membrane-spanning stretches (helical) occupy residues 208-228 (IQWE…FALW) and 237-257 (FVYF…IRGL). The N-linked (GlcNAc...) asparagine glycan is linked to Asn273. Helical transmembrane passes span 286 to 306 (AGTQ…ALGS), 321 to 341 (MCFI…SILG), 378 to 398 (VFAV…QVCM), 420 to 440 (SLGI…THSG), 454 to 474 (GYAL…GFGA), 499 to 519 (FCAP…YHPV), and 536 to 556 (WFLS…YLFF). At 557–600 (TNKHLTLKERVRKGLNLDGSFESPAKKNLVNNAEELKFIESSSQ) the chain is on the cytoplasmic side.

It belongs to the sodium:neurotransmitter symporter (SNF) family. As to expression, highly expressed in the head, the excretory canal, tail hypodermal cells, epidermis and vulval epithelial cells. Expressed in the excretory canal-associated neuron and in some non-amphidial sensory neurons in the head (at protein level).

It localises to the cell membrane. Functionally, betaine transporter dependent on Na(+) and Cl(-) ions that functions primarily in the epidermis to clear betaine from the extracellular space. Elicits current in response to betaine but not in response to GABA, L-carnitine, sarcosine, glycine or dimethylglycine. This chain is Sodium- and chloride-dependent betaine transporter, found in Caenorhabditis elegans.